Consider the following 333-residue polypeptide: Holliday junction branch migration complex subunit RuvB (333 aa).

The segment at 1–181 (MNDILNKEPM…FGISSHMEYY (181 aa)) is large ATPase domain (RuvB-L). Residues L20, R21, G62, K65, T66, T67, 128-130 (EDF), R171, Y181, and R218 contribute to the ATP site. T66 contributes to the Mg(2+) binding site. A small ATPAse domain (RuvB-S) region spans residues 182-252 (QERDLEEIVK…ITDKALSILD (71 aa)). The head domain (RuvB-H) stretch occupies residues 255–333 (AAGLDYIDQK…HLGYVYNEED (79 aa)). Positions 291, 310, and 315 each coordinate DNA.

Belongs to the RuvB family. Homohexamer. Forms an RuvA(8)-RuvB(12)-Holliday junction (HJ) complex. HJ DNA is sandwiched between 2 RuvA tetramers; dsDNA enters through RuvA and exits via RuvB. An RuvB hexamer assembles on each DNA strand where it exits the tetramer. Each RuvB hexamer is contacted by two RuvA subunits (via domain III) on 2 adjacent RuvB subunits; this complex drives branch migration. In the full resolvosome a probable DNA-RuvA(4)-RuvB(12)-RuvC(2) complex forms which resolves the HJ.

It is found in the cytoplasm. The enzyme catalyses ATP + H2O = ADP + phosphate + H(+). The RuvA-RuvB-RuvC complex processes Holliday junction (HJ) DNA during genetic recombination and DNA repair, while the RuvA-RuvB complex plays an important role in the rescue of blocked DNA replication forks via replication fork reversal (RFR). RuvA specifically binds to HJ cruciform DNA, conferring on it an open structure. The RuvB hexamer acts as an ATP-dependent pump, pulling dsDNA into and through the RuvAB complex. RuvB forms 2 homohexamers on either side of HJ DNA bound by 1 or 2 RuvA tetramers; 4 subunits per hexamer contact DNA at a time. Coordinated motions by a converter formed by DNA-disengaged RuvB subunits stimulates ATP hydrolysis and nucleotide exchange. Immobilization of the converter enables RuvB to convert the ATP-contained energy into a lever motion, pulling 2 nucleotides of DNA out of the RuvA tetramer per ATP hydrolyzed, thus driving DNA branch migration. The RuvB motors rotate together with the DNA substrate, which together with the progressing nucleotide cycle form the mechanistic basis for DNA recombination by continuous HJ branch migration. Branch migration allows RuvC to scan DNA until it finds its consensus sequence, where it cleaves and resolves cruciform DNA. This chain is Holliday junction branch migration complex subunit RuvB, found in Lactococcus lactis subsp. lactis (strain IL1403) (Streptococcus lactis).